We begin with the raw amino-acid sequence, 822 residues long: Probable phosphoketolase (822 aa).

The protein belongs to the XFP family. Thiamine diphosphate serves as cofactor.

This Nocardia farcinica (strain IFM 10152) protein is Probable phosphoketolase.